Consider the following 284-residue polypeptide: Ribosomal RNA small subunit methyltransferase A (284 aa).

S-adenosyl-L-methionine is bound by residues His-23, Leu-25, Gly-50, Glu-71, Asp-92, and Asn-121.

The protein belongs to the class I-like SAM-binding methyltransferase superfamily. rRNA adenine N(6)-methyltransferase family. RsmA subfamily.

Its subcellular location is the cytoplasm. It carries out the reaction adenosine(1518)/adenosine(1519) in 16S rRNA + 4 S-adenosyl-L-methionine = N(6)-dimethyladenosine(1518)/N(6)-dimethyladenosine(1519) in 16S rRNA + 4 S-adenosyl-L-homocysteine + 4 H(+). In terms of biological role, specifically dimethylates two adjacent adenosines (A1518 and A1519) in the loop of a conserved hairpin near the 3'-end of 16S rRNA in the 30S particle. May play a critical role in biogenesis of 30S subunits. In Verminephrobacter eiseniae (strain EF01-2), this protein is Ribosomal RNA small subunit methyltransferase A.